The primary structure comprises 144 residues: 3-hydroxyacyl-[acyl-carrier-protein] dehydratase FabZ (144 aa).

Residue histidine 48 is part of the active site.

This sequence belongs to the thioester dehydratase family. FabZ subfamily.

The protein resides in the cytoplasm. The catalysed reaction is a (3R)-hydroxyacyl-[ACP] = a (2E)-enoyl-[ACP] + H2O. Involved in unsaturated fatty acids biosynthesis. Catalyzes the dehydration of short chain beta-hydroxyacyl-ACPs and long chain saturated and unsaturated beta-hydroxyacyl-ACPs. This chain is 3-hydroxyacyl-[acyl-carrier-protein] dehydratase FabZ, found in Bacillus thuringiensis (strain Al Hakam).